Here is a 185-residue protein sequence, read N- to C-terminus: Elongation factor P (185 aa).

It belongs to the elongation factor P family.

The protein localises to the cytoplasm. The protein operates within protein biosynthesis; polypeptide chain elongation. In terms of biological role, involved in peptide bond synthesis. Stimulates efficient translation and peptide-bond synthesis on native or reconstituted 70S ribosomes in vitro. Probably functions indirectly by altering the affinity of the ribosome for aminoacyl-tRNA, thus increasing their reactivity as acceptors for peptidyl transferase. The protein is Elongation factor P of Dechloromonas aromatica (strain RCB).